A 69-amino-acid chain; its full sequence is MKPNIHPTYYHDAVVRCACGNTFITGSTKKEIRVEICSKCHPFFTGQQKIVDTGGRVERFRKRFNLEEK.

Positions 17, 19, 37, and 40 each coordinate Zn(2+).

The protein belongs to the bacterial ribosomal protein bL31 family. Type A subfamily. In terms of assembly, part of the 50S ribosomal subunit. Zn(2+) serves as cofactor.

In terms of biological role, binds the 23S rRNA. In Thermoanaerobacter pseudethanolicus (strain ATCC 33223 / 39E) (Clostridium thermohydrosulfuricum), this protein is Large ribosomal subunit protein bL31.